A 1029-amino-acid chain; its full sequence is Eukaryotic translation initiation factor 3 subunit A (1029 aa).

A coiled-coil region spans residues 92–121 (LKKFIELAEQKVTEAQAKADEIQSSLESAA). A PCI domain is found at 339-523 (MTKAASFVLL…GVLTFESDIF (185 aa)). The stretch at 606–903 (TRRAIIEKRK…EEEAEQRRAA (298 aa)) forms a coiled coil. Composition is skewed to basic and acidic residues over residues 621–632 (ALQKKQREEENR), 644–666 (EQQR…EQDR), 797–901 (TEKR…EQRR), and 913–924 (GPAREASPERTA). 2 disordered regions span residues 621–666 (ALQK…EQDR) and 797–1029 (TEKR…KQQQ). Residues 943–960 (AKAAASAGEQPAAAQEAT) are compositionally biased toward low complexity. Basic and acidic residues predominate over residues 977-993 (ATRDGPSDSRDLSHARE).

This sequence belongs to the eIF-3 subunit A family. Component of the eukaryotic translation initiation factor 3 (eIF-3) complex.

Its subcellular location is the cytoplasm. RNA-binding component of the eukaryotic translation initiation factor 3 (eIF-3) complex, which is involved in protein synthesis of a specialized repertoire of mRNAs and, together with other initiation factors, stimulates binding of mRNA and methionyl-tRNAi to the 40S ribosome. The eIF-3 complex specifically targets and initiates translation of a subset of mRNAs involved in cell proliferation. This Coccidioides immitis (strain RS) (Valley fever fungus) protein is Eukaryotic translation initiation factor 3 subunit A.